A 557-amino-acid polypeptide reads, in one-letter code: 6-phosphofructo-2-kinase/fructose-2,6-bisphosphatase 2 (557 aa).

The span at M1–S16 shows a compositional bias: low complexity. Residues M1–A21 are disordered. N-acetylserine is present on S2. Residues S2–H251 form a 6-phosphofructo-2-kinase region. At S32 the chain carries Phosphoserine; by PKA. ATP is bound at residue G48–Y56. Residues R81 and R105 each coordinate beta-D-fructose 6-phosphate. D131 is an active-site residue. Beta-D-fructose 6-phosphate is bound by residues T133 and R139. Residue C161 is part of the active site. N170–K175 serves as a coordination point for ATP. Residues K175, R196, and Y200 each contribute to the beta-D-fructose 6-phosphate site. Residues P252–S557 form a fructose-2,6-bisphosphatase region. A beta-D-fructose 2,6-bisphosphate-binding site is contributed by R259. The Tele-phosphohistidine intermediate role is filled by H260. N266 and G272 together coordinate beta-D-fructose 2,6-bisphosphate. E329 acts as the Proton donor/acceptor in catalysis. Residues Y340, R354, K358, Y369, Q395, and R399 each coordinate beta-D-fructose 2,6-bisphosphate. F351–R354 contributes to the ATP binding site. ATP-binding positions include Q395–R399 and Y431. The segment at R449–L495 is disordered. Over residues F456–I479 the composition is skewed to polar residues. S469 bears the Phosphoserine mark. T471 carries the post-translational modification Phosphothreonine. T478 is subject to Phosphothreonine; by PKC. Phosphoserine occurs at positions 486 and 496.

The protein in the C-terminal section; belongs to the phosphoglycerate mutase family. As to quaternary structure, homodimer. Forms a heterodimer with PFKFB3. In terms of processing, phosphorylation by AMPK stimulates activity.

The enzyme catalyses beta-D-fructose 2,6-bisphosphate + H2O = beta-D-fructose 6-phosphate + phosphate. It carries out the reaction beta-D-fructose 6-phosphate + ATP = beta-D-fructose 2,6-bisphosphate + ADP + H(+). With respect to regulation, phosphorylation results in the activation of the kinase activity. Its function is as follows. Synthesis and degradation of fructose 2,6-bisphosphate. The protein is 6-phosphofructo-2-kinase/fructose-2,6-bisphosphatase 2 (Pfkfb2) of Rattus norvegicus (Rat).